A 106-amino-acid polypeptide reads, in one-letter code: NADH dehydrogenase [ubiquinone] iron-sulfur protein 5 (106 aa).

The 45-residue stretch at 30-74 folds into the CHCH domain; sequence AGRCHAFEKEWIECAHGIGYTRAEKECKIEYDDFVECLLRQKTMR. Short sequence motifs (cx9C motif) lie at residues 33 to 43 and 56 to 66; these read CHAFEKEWIEC and CKIEYDDFVEC. Intrachain disulfides connect Cys-33/Cys-66 and Cys-43/Cys-56. Residues 84 to 106 are disordered; the sequence is DKLIKEGKYTPPPHHIGKGEPRP.

The protein belongs to the complex I NDUFS5 subunit family. In terms of assembly, mammalian complex I is composed of 45 different subunits. This is a component of the iron-sulfur (IP) fragment of the enzyme.

It localises to the mitochondrion inner membrane. The protein localises to the mitochondrion intermembrane space. In terms of biological role, accessory subunit of the mitochondrial membrane respiratory chain NADH dehydrogenase (Complex I), that is believed not to be involved in catalysis. Complex I functions in the transfer of electrons from NADH to the respiratory chain. The immediate electron acceptor for the enzyme is believed to be ubiquinone. This is NADH dehydrogenase [ubiquinone] iron-sulfur protein 5 (NDUFS5) from Homo sapiens (Human).